A 94-amino-acid polypeptide reads, in one-letter code: Progonadoliberin-3 (94 aa).

The N-terminal stretch at 1-23 (MEWKGRVLVQLLMLVCVLEVSLC) is a signal peptide. Residue glutamine 24 is modified to Pyrrolidone carboxylic acid. Position 33 is a glycine amide (glycine 33).

It belongs to the GnRH family.

The protein localises to the secreted. In terms of biological role, stimulates the secretion of gonadotropins. The protein is Progonadoliberin-3 (gnrh3) of Rutilus rutilus (Roach).